A 186-amino-acid chain; its full sequence is Ribosome-recycling factor (186 aa).

Belongs to the RRF family.

It localises to the cytoplasm. Its function is as follows. Responsible for the release of ribosomes from messenger RNA at the termination of protein biosynthesis. May increase the efficiency of translation by recycling ribosomes from one round of translation to another. This Pelodictyon phaeoclathratiforme (strain DSM 5477 / BU-1) protein is Ribosome-recycling factor.